The sequence spans 820 residues: LPS-assembly protein LptD (820 aa).

The tract at residues 1–27 (MDLSSLPDPLRPTHSRLPARRRDRAEP) is disordered. A compositionally biased stretch (basic residues) spans 13–22 (THSRLPARRR).

This sequence belongs to the LptD family. In terms of assembly, component of the lipopolysaccharide transport and assembly complex. Interacts with LptE and LptA.

In terms of biological role, together with LptE, is involved in the assembly of lipopolysaccharide (LPS) at the surface of the outer membrane. The protein is LPS-assembly protein LptD of Paracidovorax citrulli (strain AAC00-1) (Acidovorax citrulli).